The following is a 548-amino-acid chain: Chaperonin GroEL 1 (548 aa).

ATP is bound by residues 30 to 33 (TLGP), Lys51, 87 to 91 (DGTTT), Gly415, 479 to 481 (NAA), and Asp495.

Belongs to the chaperonin (HSP60) family. In terms of assembly, forms a cylinder of 14 subunits composed of two heptameric rings stacked back-to-back. Interacts with the co-chaperonin GroES.

The protein localises to the cytoplasm. It catalyses the reaction ATP + H2O + a folded polypeptide = ADP + phosphate + an unfolded polypeptide.. Functionally, together with its co-chaperonin GroES, plays an essential role in assisting protein folding. The GroEL-GroES system forms a nano-cage that allows encapsulation of the non-native substrate proteins and provides a physical environment optimized to promote and accelerate protein folding. The polypeptide is Chaperonin GroEL 1 (Escherichia coli O1:K1 / APEC).